A 351-amino-acid polypeptide reads, in one-letter code: DNA polymerase IV (351 aa).

Residues 4–185 (IIHVDMDCFY…LPLGKIPGVG (182 aa)) form the UmuC domain. Mg(2+) is bound by residues Asp8 and Asp103. Glu104 is a catalytic residue.

This sequence belongs to the DNA polymerase type-Y family. In terms of assembly, monomer. The cofactor is Mg(2+).

The protein resides in the cytoplasm. It catalyses the reaction DNA(n) + a 2'-deoxyribonucleoside 5'-triphosphate = DNA(n+1) + diphosphate. Functionally, poorly processive, error-prone DNA polymerase involved in untargeted mutagenesis. Copies undamaged DNA at stalled replication forks, which arise in vivo from mismatched or misaligned primer ends. These misaligned primers can be extended by PolIV. Exhibits no 3'-5' exonuclease (proofreading) activity. May be involved in translesional synthesis, in conjunction with the beta clamp from PolIII. This is DNA polymerase IV from Citrobacter koseri (strain ATCC BAA-895 / CDC 4225-83 / SGSC4696).